A 336-amino-acid polypeptide reads, in one-letter code: 2-phospho-L-lactate transferase (336 aa).

Aspartate 49 provides a ligand contact to 7,8-didemethyl-8-hydroxy-5-deazariboflavin.

Belongs to the CofD family. As to quaternary structure, homodimer. Mg(2+) is required as a cofactor.

The catalysed reaction is (2S)-lactyl-2-diphospho-5'-guanosine + 7,8-didemethyl-8-hydroxy-5-deazariboflavin = oxidized coenzyme F420-0 + GMP + H(+). The protein operates within cofactor biosynthesis; coenzyme F420 biosynthesis. Functionally, catalyzes the transfer of the 2-phospholactate moiety from (2S)-lactyl-2-diphospho-5'-guanosine to 7,8-didemethyl-8-hydroxy-5-deazariboflavin (FO) with the formation of oxidized coenzyme F420-0 and GMP. The polypeptide is 2-phospho-L-lactate transferase (Halobacterium salinarum (strain ATCC 700922 / JCM 11081 / NRC-1) (Halobacterium halobium)).